Here is a 381-residue protein sequence, read N- to C-terminus: N-acetyl-alpha-D-glucosaminyl L-malate synthase (381 aa).

Positions 16, 94, and 122 each coordinate (S)-malate. The UDP site is built by asparagine 206, glutamine 262, and glutamate 290.

The protein belongs to the glycosyltransferase group 1 family. Glycosyltransferase 4 subfamily. As to quaternary structure, dimer of tetramers.

It catalyses the reaction (S)-malate + UDP-N-acetyl-alpha-D-glucosamine = (S)-malyl N-acetyl-alpha-D-glucosaminide + UDP + H(+). Involved in bacillithiol (BSH) biosynthesis. Catalyzes the first step of the pathway, the formation of N-acetylglucosaminylmalate (GlcNAc-Mal) from UDP-N-acetylglucosamine (UDP-GlcNAc) and L-malate. The polypeptide is N-acetyl-alpha-D-glucosaminyl L-malate synthase (Bacillus anthracis).